Reading from the N-terminus, the 488-residue chain is Bifunctional protein NifU/MnmA (488 aa).

The nifU-like protein stretch occupies residues 1–130 (MPERYGPRVI…DYWSRQGDAL (130 aa)). The tRNA-specific 2-thiouridylase MnmA stretch occupies residues 143–488 (RRGVVAAMSG…GGGIIARRDA (346 aa)). ATP-binding positions include 149–156 (AMSGGVDS) and phenylalanine 175. Catalysis depends on cysteine 240, which acts as the Nucleophile. Cysteine 240 and cysteine 333 are joined by a disulfide. Glycine 264 contributes to the ATP binding site. The tract at residues 283 to 285 (KDQ) is interaction with tRNA. The Cysteine persulfide intermediate role is filled by cysteine 333. Positions 433-434 (RY) are interaction with tRNA.

In the N-terminal section; belongs to the NifU family. The protein in the C-terminal section; belongs to the MnmA/TRMU family.

Its subcellular location is the cytoplasm. It catalyses the reaction S-sulfanyl-L-cysteinyl-[protein] + uridine(34) in tRNA + AH2 + ATP = 2-thiouridine(34) in tRNA + L-cysteinyl-[protein] + A + AMP + diphosphate + H(+). In terms of biological role, may be involved in the formation or repair of [Fe-S] clusters present in iron-sulfur proteins. Its function is as follows. Catalyzes the 2-thiolation of uridine at the wobble position (U34) of tRNA, leading to the formation of s(2)U34. The chain is Bifunctional protein NifU/MnmA (nifU/mnmA) from Rubrobacter xylanophilus (strain DSM 9941 / JCM 11954 / NBRC 16129 / PRD-1).